Reading from the N-terminus, the 197-residue chain is Zinc finger protein 581 (197 aa).

Pro residues predominate over residues 1–10; it reads MLVLPSPCPQ. Residues 1-52 are disordered; sequence MLVLPSPCPQPLAFSSVETMEGPPRRTCRSPEPGPSSSIGSPQASSPPRPNH. A compositionally biased stretch (low complexity) spans 35 to 44; sequence PSSSIGSPQA. 4 C2H2-type zinc fingers span residues 87–109, 115–137, 145–167, and 173–196; these read YSCP…SITH, FECD…HSIH, HGCP…SRVH, and FQCP…RWKH.

It localises to the nucleus. Its function is as follows. May be involved in transcriptional regulation. This Homo sapiens (Human) protein is Zinc finger protein 581 (ZNF581).